Consider the following 427-residue polypeptide: Enolase (427 aa).

Residue Gln-162 coordinates (2R)-2-phosphoglycerate. Glu-204 serves as the catalytic Proton donor. Asp-241, Glu-282, and Asp-309 together coordinate Mg(2+). (2R)-2-phosphoglycerate is bound by residues Lys-334, Arg-363, Ser-364, and Lys-385. The Proton acceptor role is filled by Lys-334.

This sequence belongs to the enolase family. Requires Mg(2+) as cofactor.

It is found in the cytoplasm. Its subcellular location is the secreted. It localises to the cell surface. The enzyme catalyses (2R)-2-phosphoglycerate = phosphoenolpyruvate + H2O. It functions in the pathway carbohydrate degradation; glycolysis; pyruvate from D-glyceraldehyde 3-phosphate: step 4/5. Its function is as follows. Catalyzes the reversible conversion of 2-phosphoglycerate (2-PG) into phosphoenolpyruvate (PEP). It is essential for the degradation of carbohydrates via glycolysis. In Parafrankia sp. (strain EAN1pec), this protein is Enolase.